The following is a 1309-amino-acid chain: Nuclear pore complex protein NUP1 (1309 aa).

Disordered regions lie at residues 1–58 (MASA…GGGW), 83–118 (RKRL…HKED), 173–210 (AADS…GSMN), 266–296 (RTPF…VTPR), 329–348 (SKWE…SGLK), 384–417 (ESPL…NLVP), 467–538 (LGNL…EEHP), 594–617 (SEAM…NGSL), and 635–680 (SNMA…VFPN). The segment at 2-677 (ASAARGESSN…LEEPKKPAAV (676 aa)) is 25 X 2 AA repeats of F-G. Basic residues predominate over residues 22–32 (KFRKPTARRSQ). Gly residues predominate over residues 47–58 (GLGGGDVRGGGW). Polar residues predominate over residues 91–101 (TPLQSPEQQKQ). Positions 195–204 (PSHERDRTHP) are enriched in basic and acidic residues. The span at 268-283 (PFPQKSPTMSLVTKPS) shows a compositional bias: polar residues. Basic and acidic residues predominate over residues 396–405 (KTTHTSKDSA). 2 stretches are compositionally biased toward polar residues: residues 597–617 (MPST…NGSL) and 635–659 (SNMA…SGKP). Over residues 660-673 (TSEEKRIPLEEPKK) the composition is skewed to basic and acidic residues. Repeat unit 1 spans residues 711-712 (FG). A disordered region spans residues 719-865 (KPTESKKTFS…VKNATFGNTS (147 aa)). 2 stretches are compositionally biased toward low complexity: residues 728–741 (SNSA…TSAA) and 767–783 (SSPS…SDNS). Polar residues predominate over residues 789-803 (STVQSFAATHNSSSI). Copy 2 of the repeat occupies 804-805 (FG). Over residues 809–827 (TSNDSNSQSTSASPLSSTS) the composition is skewed to low complexity. 12 consecutive repeat copies span residues 831 to 832 (FG), 861 to 862 (FG), 869 to 870 (FG), 883 to 884 (FG), 898 to 899 (FG), 927 to 928 (FG), 956 to 957 (FG), 983 to 984 (FG), 1004 to 1005 (FG), 1029 to 1030 (FG), 1038 to 1039 (FG), and 1053 to 1054 (FG). Residues 1004 to 1023 (FGAGNAQTGNTGSGTTTSTQ) are compositionally biased toward low complexity. A disordered region spans residues 1004–1028 (FGAGNAQTGNTGSGTTTSTQSIPFQ). Residues 1068–1086 (TPQLSSTNSSASSSSTMSS) show a composition bias toward low complexity. Residues 1068–1105 (TPQLSSTNSSASSSSTMSSPLFGTSWQAPNSSPNSGPV) form a disordered region. Residues 1089-1090 (FG) form repeat 15. Over residues 1096–1105 (PNSSPNSGPV) the composition is skewed to low complexity. Tandem repeats lie at residues 1121–1122 (FG), 1137–1138 (FG), 1151–1152 (FG), 1153–1154 (FG), 1166–1167 (FG), 1177–1178 (FG), 1186–1187 (FG), 1224–1225 (FG), 1238–1239 (FG), and 1255–1256 (FG). Positions 1278–1309 (FQGGGSFSLGSTGGGDKSGRRIFKAKKSTRKK) are disordered. A compositionally biased stretch (gly residues) spans 1279–1293 (QGGGSFSLGSTGGGD). The segment covering 1297 to 1309 (RRIFKAKKSTRKK) has biased composition (basic residues).

In terms of assembly, part of the nuclear pore complex (NPC). The NPC has an eight-fold symmetrical structure comprising a central transport channel and two rings, the cytoplasmic and nuclear rings, to which eight filaments are attached. The cytoplasmic filaments have loose ends, while the nuclear filaments are joined in a distal ring, forming a nuclear basket. NPCs are highly dynamic in configuration and composition, and can be devided in 3 subcomplexes, the NUP62 subcomplex, the NUP107-160 subcomplex and the NUP93 subcomplex, containing approximately 30 different nucleoporin proteins. Interacts with EER5, anchoring the TREX-2 complex on the nuclear pore complex. Interacts with UCH1 and UCH2.

It localises to the nucleus envelope. The protein resides in the nucleus. The protein localises to the nuclear pore complex. Its subcellular location is the cytoplasm. It is found in the cytosol. Functionally, nucleoporin required for nuclear mRNA export. Functions as an adapter and/or regulator molecule in the periphery of the nuclear pore complex (NPC). May interact with importin proteins and mediate active nucleocytoplasmic transport through the NPC. Involved in regulation of nuclear morphology. In Arabidopsis thaliana (Mouse-ear cress), this protein is Nuclear pore complex protein NUP1.